The following is a 424-amino-acid chain: Set1 complex component spp1 (424 aa).

Residues Q80–L108 form a disordered region. Positions A92–G102 are enriched in basic residues. The segment at P118–E168 adopts a PHD-type zinc-finger fold.

In terms of assembly, component of the Set1 complex composed of ash2, sdc1, set1, shg1, spp1, swd1, swd2 and swd3.

The protein resides in the nucleus. Functionally, the Set1 complex specifically methylates 'Lys-4' of histone H3. The chain is Set1 complex component spp1 (spp1) from Schizosaccharomyces pombe (strain 972 / ATCC 24843) (Fission yeast).